Reading from the N-terminus, the 207-residue chain is Large ribosomal subunit protein uL4 (207 aa).

The disordered stretch occupies residues 44–77 (RRQGTHDTKTRSEVRGGGRKPWRQKGTGRARHGT). The span at 47-59 (GTHDTKTRSEVRG) shows a compositional bias: basic and acidic residues. Residues 60–77 (GGRKPWRQKGTGRARHGT) show a composition bias toward basic residues.

The protein belongs to the universal ribosomal protein uL4 family. As to quaternary structure, part of the 50S ribosomal subunit.

Its function is as follows. One of the primary rRNA binding proteins, this protein initially binds near the 5'-end of the 23S rRNA. It is important during the early stages of 50S assembly. It makes multiple contacts with different domains of the 23S rRNA in the assembled 50S subunit and ribosome. Forms part of the polypeptide exit tunnel. In Desulforudis audaxviator (strain MP104C), this protein is Large ribosomal subunit protein uL4.